We begin with the raw amino-acid sequence, 140 residues long: ATP synthase epsilon chain (140 aa).

This sequence belongs to the ATPase epsilon chain family. In terms of assembly, F-type ATPases have 2 components, CF(1) - the catalytic core - and CF(0) - the membrane proton channel. CF(1) has five subunits: alpha(3), beta(3), gamma(1), delta(1), epsilon(1). CF(0) has three main subunits: a, b and c.

Its subcellular location is the cell membrane. In terms of biological role, produces ATP from ADP in the presence of a proton gradient across the membrane. This Enterococcus hirae (strain ATCC 9790 / DSM 20160 / JCM 8729 / LMG 6399 / NBRC 3181 / NCIMB 6459 / NCDO 1258 / NCTC 12367 / WDCM 00089 / R) protein is ATP synthase epsilon chain (atpC).